The following is a 318-amino-acid chain: NLP effector protein 7 (318 aa).

A signal peptide spans 1 to 19; the sequence is MRLFAFLWSSVAFLSTVQA. Residues 23–41 show a composition bias toward low complexity; it reads QTASQTQDDSSTPTPTPTD. 2 disordered regions span residues 23–42 and 51–96; these read QTASQTQDDSSTPTPTPTDK and RTKT…TPDP. Residues 55–65 show a composition bias toward polar residues; it reads PMATPNRTIMP. N-linked (GlcNAc...) asparagine glycosylation occurs at asparagine 60. The span at 73–96 shows a compositional bias: pro residues; that stretch reads TEPPTPEPTYLPTPSPTPAPTPDP. The short motif at 185-195 is the Conserved undecapeptide motif I element; it reads AIMYSWYFPKD. The Hepta-peptide GHRHDWE motif II signature appears at 202–208; sequence GHRHDWE.

It belongs to the Necrosis inducing protein (NPP1) family.

It localises to the secreted. Secreted effector that contributes moderately to virulence during infection by P.capsici. Does not cause visible reaction of C.annuum for several days after inoculation, but by 7 days after inoculation, small necrotic lesions become visible. Leads only to chlorotic areas, without necrosis at 7 days after non-host N.benthamiana leaves infection. The sequence is that of NLP effector protein 7 from Phytophthora capsici.